The chain runs to 236 residues: MTKRYWNITFEEMMEAGVHFGHDTRKWNPRMAPFISAKRKGIHITNLTKTARFLSEACDLAFDAASKGKQFLIVGTKKKAADSVTRAAIRARCHYVNKKWLRGMLTNWYTTETRLGKFRDLRTEQKTGKLNSLPKRDAAMLKRQLSHFETYLGGIKYMTGLPDIVIIVDQQKEYTALQECITLGIPTICLIDTNCDPDLADMSIPANDDAIASIRLILNKLVFAICEGRSSSIRNY.

This sequence belongs to the universal ribosomal protein uS2 family.

Its subcellular location is the plastid. It localises to the chloroplast. The sequence is that of Small ribosomal subunit protein uS2c (rps2) from Pisum sativum (Garden pea).